The chain runs to 388 residues: 3-dehydroquinate synthase (388 aa).

It belongs to the archaeal-type DHQ synthase family.

The enzyme catalyses 2-amino-2,3,7-trideoxy-D-lyxo-hept-6-ulosonate + NAD(+) + H2O = 3-dehydroquinate + NH4(+) + NADH + H(+). Functionally, catalyzes the oxidative deamination and cyclization of 2-amino-3,7-dideoxy-D-threo-hept-6-ulosonic acid (ADH) to yield 3-dehydroquinate (DHQ), which is fed into the canonical shikimic pathway of aromatic amino acid biosynthesis. This chain is 3-dehydroquinate synthase, found in Haloarcula marismortui (strain ATCC 43049 / DSM 3752 / JCM 8966 / VKM B-1809) (Halobacterium marismortui).